Reading from the N-terminus, the 224-residue chain is Cytidylate kinase (224 aa).

11 to 19 (GPAAAGKST) is an ATP binding site.

Belongs to the cytidylate kinase family. Type 1 subfamily.

It localises to the cytoplasm. The enzyme catalyses CMP + ATP = CDP + ADP. It carries out the reaction dCMP + ATP = dCDP + ADP. The polypeptide is Cytidylate kinase (Listeria monocytogenes serovar 1/2a (strain ATCC BAA-679 / EGD-e)).